The chain runs to 347 residues: Mediator of RNA polymerase II transcription subunit 7 (347 aa).

Disordered stretches follow at residues 97-172 and 302-326; these read GIER…TQTH and VPVG…GAEE. 2 stretches are compositionally biased toward low complexity: residues 108-171 and 302-312; these read STTT…STQT and VPVGARTGTTV.

The protein belongs to the Mediator complex subunit 7 family. In terms of assembly, component of the Mediator complex.

The protein resides in the nucleus. Functionally, component of the Mediator complex, a coactivator involved in the regulated transcription of nearly all RNA polymerase II-dependent genes. Mediator functions as a bridge to convey information from gene-specific regulatory proteins to the basal RNA polymerase II transcription machinery. Mediator is recruited to promoters by direct interactions with regulatory proteins and serves as a scaffold for the assembly of a functional preinitiation complex with RNA polymerase II and the general transcription factors. The chain is Mediator of RNA polymerase II transcription subunit 7 (med-7) from Neurospora crassa (strain ATCC 24698 / 74-OR23-1A / CBS 708.71 / DSM 1257 / FGSC 987).